A 548-amino-acid chain; its full sequence is DNA ligase (548 aa).

E196 lines the ATP pocket. The active-site N6-AMP-lysine intermediate is K198. Residues R203, R218, E250, and F284 each contribute to the ATP site. A divalent metal cation is bound at residue E250. E345 lines the a divalent metal cation pocket. 2 residues coordinate ATP: R361 and K365. A disordered region spans residues 515 to 548 (EQLIRNSQENTKKTFARLATTYDGPSPNKKLKLN).

This sequence belongs to the ATP-dependent DNA ligase family. A divalent metal cation is required as a cofactor.

The enzyme catalyses ATP + (deoxyribonucleotide)n-3'-hydroxyl + 5'-phospho-(deoxyribonucleotide)m = (deoxyribonucleotide)n+m + AMP + diphosphate.. In terms of biological role, able to ligate a double-stranded synthetic DNA substrate containing a single nick and inefficiently ligated a 1 nucleotide gap but did not ligate a 2 nucleotide gap. It is able to ligate short, complementary overhangs but not blunt-ended double-stranded DNA. May be implicated in DNA repair and recombination. This chain is DNA ligase (LIG), found in Lepidoptera (butterflies and moths).